A 511-amino-acid chain; its full sequence is MSDHAMNEQRDHDTRLRAWRTGIDTYQEPIVYMRSDCVVCRSEGFTTQTRVLLTAGTRSAVATLNVVEGNWLAPGVAGLSEAAWHALDPAADAWINVSYAPTLDSLSHVRAKVYGHRLDAGAFNAVIGDVAAGRYSDLYLAAFVTACAGDRLDLSETVALTRAMVAVGHRLDWGRETVVDKHCVGGLPGNRTTLLVVPIVAACGLTMPKTSSRAITSPAGTADTMEVLAPVNLDIAAMRRTVERTGGCIVWGGSVRLSPADDVLIRVERPLDLDSEGQLVASVLSKKAAAGSTHVLIDLPVGPTAKVRSTEAAQSLGRRLVEVGRAIGLQVTLRITDGLQPVGRGVGPALEARDVLAVLRGQADAPDDLRQRALRLAGDILELGGAAPNGSGLQLAAEVLADGRAWAKFQAICEAQGGLREVPVTPYRQVITAAVAGRVAAIDNRVLARAAKLAGAPKAPAAGVDVHARIGDPVQAGQPLFTLHAQTAGELDYAGHFVDTRPPIFQISEEA.

This sequence belongs to the thymidine/pyrimidine-nucleoside phosphorylase family. Type 2 subfamily.

It catalyses the reaction thymidine + phosphate = 2-deoxy-alpha-D-ribose 1-phosphate + thymine. This is Putative thymidine phosphorylase 1 from Acidovorax sp. (strain JS42).